Consider the following 359-residue polypeptide: tRNA N6-adenosine threonylcarbamoyltransferase (359 aa).

Fe cation contacts are provided by His115 and His119. Residues Leu137–Gly141, Asp170, Gly183, and Asn283 contribute to the substrate site. Position 311 (Asp311) interacts with Fe cation. A disordered region spans residues Ala328 to Ala359.

Belongs to the KAE1 / TsaD family. The cofactor is Fe(2+).

It localises to the cytoplasm. The enzyme catalyses L-threonylcarbamoyladenylate + adenosine(37) in tRNA = N(6)-L-threonylcarbamoyladenosine(37) in tRNA + AMP + H(+). Its function is as follows. Required for the formation of a threonylcarbamoyl group on adenosine at position 37 (t(6)A37) in tRNAs that read codons beginning with adenine. Is involved in the transfer of the threonylcarbamoyl moiety of threonylcarbamoyl-AMP (TC-AMP) to the N6 group of A37, together with TsaE and TsaB. TsaD likely plays a direct catalytic role in this reaction. This is tRNA N6-adenosine threonylcarbamoyltransferase from Brucella melitensis biotype 2 (strain ATCC 23457).